Consider the following 210-residue polypeptide: tRNA (guanine-N(7)-)-methyltransferase (210 aa).

The S-adenosyl-L-methionine site is built by Glu36, Glu61, Asp90, and Asp112. Asp112 is a catalytic residue. Residues Lys116, Asp148, and 188-191 (TEYE) contribute to the substrate site.

This sequence belongs to the class I-like SAM-binding methyltransferase superfamily. TrmB family.

It carries out the reaction guanosine(46) in tRNA + S-adenosyl-L-methionine = N(7)-methylguanosine(46) in tRNA + S-adenosyl-L-homocysteine. It participates in tRNA modification; N(7)-methylguanine-tRNA biosynthesis. Functionally, catalyzes the formation of N(7)-methylguanine at position 46 (m7G46) in tRNA. This chain is tRNA (guanine-N(7)-)-methyltransferase, found in Mycoplasma pneumoniae (strain ATCC 29342 / M129 / Subtype 1) (Mycoplasmoides pneumoniae).